The chain runs to 122 residues: Large ribosomal subunit protein eL34 (122 aa).

This sequence belongs to the eukaryotic ribosomal protein eL34 family. As to quaternary structure, component of the large ribosomal subunit. Mature ribosomes consist of a small (40S) and a large (60S) subunit. The 40S subunit contains about 32 different proteins and 1 molecule of RNA (18S). The 60S subunit contains 45 different proteins and 3 molecules of RNA (25S, 5.8S and 5S).

The protein resides in the cytoplasm. Functionally, component of the ribosome, a large ribonucleoprotein complex responsible for the synthesis of proteins in the cell. The small ribosomal subunit (SSU) binds messenger RNAs (mRNAs) and translates the encoded message by selecting cognate aminoacyl-transfer RNA (tRNA) molecules. The large subunit (LSU) contains the ribosomal catalytic site termed the peptidyl transferase center (PTC), which catalyzes the formation of peptide bonds, thereby polymerizing the amino acids delivered by tRNAs into a polypeptide chain. The nascent polypeptides leave the ribosome through a tunnel in the LSU and interact with protein factors that function in enzymatic processing, targeting, and the membrane insertion of nascent chains at the exit of the ribosomal tunnel. This chain is Large ribosomal subunit protein eL34, found in Candida albicans (strain SC5314 / ATCC MYA-2876) (Yeast).